Here is a 172-residue protein sequence, read N- to C-terminus: 18.6 kDa class III heat shock protein (172 aa).

Residues 29–54 (RRSAGDHAHHAAHGHGQHRISGIGGG) form a disordered region. The sHSP domain maps to 48–172 (ISGIGGGAPV…KTKSVQVTIA (125 aa)).

This sequence belongs to the small heat shock protein (HSP20) family. May form oligomeric structures.

It localises to the cytoplasm. In Oryza sativa subsp. japonica (Rice), this protein is 18.6 kDa class III heat shock protein (HSP18.6).